A 2357-amino-acid polypeptide reads, in one-letter code: Protein transport protein Sec16A (2357 aa).

Disordered regions lie at residues 1–225, 240–347, 394–463, 504–562, 579–630, 666–689, 714–739, 778–820, 917–1008, 1023–1055, and 1076–1151; these read MQPP…SYQH, QAAS…AHHP, SFSS…GTGT, YGPL…ARPQ, DTSG…TSAN, KRRA…DNME, TAGT…GPVK, SEVV…PPKV, VTGA…QEEA, PVRM…LHNQ, and QPEL…AAVR. Polar residues-rich tracts occupy residues 57–75 and 94–104; these read NRQT…SSLP and TPTNAGDSSTG. Over residues 208-221 the composition is skewed to low complexity; sequence MPGQWGPAQGGPQP. The segment covering 281-290 has biased composition (polar residues); it reads VHQQSKNHPL. Ser-311 bears the Phosphoserine mark. Residues 333 to 342 are compositionally biased toward polar residues; the sequence is PFTQGNSPEN. Residues 540–561 are compositionally biased toward low complexity; that stretch reads PDSVSSSYSSHSHRSPPGSARP. A phosphoserine mark is found at Ser-581, Ser-591, Ser-609, Ser-611, and Ser-614. The span at 581–590 shows a compositional bias: polar residues; the sequence is SGSFFKQIDS. Position 615 is a phosphothreonine (Thr-615). Ser-617 bears the Phosphoserine mark. Composition is skewed to polar residues over residues 921 to 959, 972 to 997, and 1029 to 1041; these read SLPS…QTPQ, FVSS…PNSN, and PSPS…QQPL. Residues 1037–1905 form a required for localization to endoplasmic reticulum exit sites region; the sequence is SQQPLPNHPR…QHVERQIQEG (869 aa). Ser-1087 is modified (phosphoserine). The interaction with MIA3 stretch occupies residues 1118–1415; sequence ASPASVNTGQ…EAPHAPGSFH (298 aa). The segment at 1119–1420 is required for endoplasmic reticulum localization; that stretch reads SPASVNTGQL…PGSFHGDYAY (302 aa). Residues 1134–1150 show a composition bias toward low complexity; it reads QASSASVTSTNSSQAAV. Ser-1223 is modified (phosphoserine). The tract at residues 1226-1253 is disordered; sequence AENHRYSEPERPSSRASHYSDQLAPRQG. Residues 1227-1238 show a composition bias toward basic and acidic residues; sequence ENHRYSEPERPS. Residue Ser-1245 is modified to Phosphoserine. The residue at position 1340 (Thr-1340) is a Phosphothreonine. Phosphoserine occurs at positions 1342, 1362, 1365, 1371, 1374, 1377, 1384, 1588, and 1616. Residues 1344 to 1395 are disordered; that stretch reads DDDAEIHRDPYGEEADRRSIHSEHSARSLRSTHSLPSRRSSLSSHSHQSQIY. Residues 1348-1369 are compositionally biased toward basic and acidic residues; it reads EIHRDPYGEEADRRSIHSEHSA. The span at 1371–1392 shows a compositional bias: low complexity; the sequence is SLRSTHSLPSRRSSLSSHSHQS. The interval 1449-1905 is central conserved domain (CCD); mediates interaction with RNF183, LRRK2 and SEC13; the sequence is QVPSRPTSPE…QHVERQIQEG (457 aa). Residues 1907-1943 are disordered; the sequence is VLWSQDGTEPQQCRITSGSEVEQSDGPGLNQQAGPQA. The segment covering 1908–1927 has biased composition (polar residues); sequence LWSQDGTEPQQCRITSGSEV. Thr-1922 carries the post-translational modification Phosphothreonine. A phosphoserine mark is found at Ser-1951, Ser-2043, Ser-2063, Ser-2077, and Ser-2094. 3 disordered regions span residues 1993 to 2141, 2156 to 2198, and 2240 to 2357; these read ELSP…RTEA, KKNQ…PTAS, and PLPI…AALN. The segment covering 2092 to 2105 has biased composition (polar residues); the sequence is GSSSLTRAPSLTSD. Positions 2106–2126 are enriched in basic and acidic residues; sequence SEGKKPAQAVKKEPKEPKKTE. The tract at residues 2126–2357 is required for interaction with SEC23A; it reads ESWFSRWLPG…IGQRKYAALN (232 aa). The residue at position 2291 (Ser-2291) is a Phosphoserine. Residues 2332–2343 are compositionally biased toward polar residues; that stretch reads QLVQASVTSGNS.

This sequence belongs to the SEC16 family. As to quaternary structure, SEC16A and SEC16B are each present in multiple copies in a heteromeric complex. Interacts with SEC23A. Interacts with RNF183, RNF152, MIA3 and SEC13. Interacts with GORASP2 in response to ER stress. Interacts with LRRK2 (via ROC domain). Interacts with RAB10.

The protein resides in the endoplasmic reticulum membrane. The protein localises to the golgi apparatus membrane. It is found in the cytoplasm. It localises to the perinuclear region. Its subcellular location is the cytosol. The protein resides in the microsome membrane. In terms of biological role, acts as a molecular scaffold that plays a key role in the organization of the endoplasmic reticulum exit sites (ERES), also known as transitional endoplasmic reticulum (tER). SAR1A-GTP-dependent assembly of SEC16A on the ER membrane forms an organized scaffold defining an ERES. Required for secretory cargo traffic from the endoplasmic reticulum to the Golgi apparatus. Mediates the recruitment of MIA3/TANGO to ERES. Regulates both conventional (ER/Golgi-dependent) and GORASP2-mediated unconventional (ER/Golgi-independent) trafficking of CFTR to cell membrane. Acts as a RAB10 effector in the regulation of insulin-induced SLC2A4/GLUT4 glucose transporter-enriched vesicles delivery to the plasma membrane in adipocytes. In Mus musculus (Mouse), this protein is Protein transport protein Sec16A (Sec16a).